The sequence spans 271 residues: NH(3)-dependent NAD(+) synthetase (271 aa).

43–50 contacts ATP; the sequence is GISGGQDS. D49 is a Mg(2+) binding site. R137 lines the deamido-NAD(+) pocket. T157 serves as a coordination point for ATP. E162 serves as a coordination point for Mg(2+). Deamido-NAD(+) is bound by residues K170 and D177. ATP-binding residues include K186 and T208. 257-258 serves as a coordination point for deamido-NAD(+); the sequence is HK.

This sequence belongs to the NAD synthetase family. In terms of assembly, homodimer.

It catalyses the reaction deamido-NAD(+) + NH4(+) + ATP = AMP + diphosphate + NAD(+) + H(+). It participates in cofactor biosynthesis; NAD(+) biosynthesis; NAD(+) from deamido-NAD(+) (ammonia route): step 1/1. Functionally, catalyzes the ATP-dependent amidation of deamido-NAD to form NAD. Uses ammonia as a nitrogen source. The sequence is that of NH(3)-dependent NAD(+) synthetase from Exiguobacterium sibiricum (strain DSM 17290 / CCUG 55495 / CIP 109462 / JCM 13490 / 255-15).